Reading from the N-terminus, the 706-residue chain is Gamma-adducin (706 aa).

Over residues 1-10 (MSSDASQGVI) the composition is skewed to polar residues. The tract at residues 1-20 (MSSDASQGVITTPPPPSMPH) is disordered. N-acetylserine is present on serine 2. Phosphoserine is present on residues serine 42, serine 64, serine 402, serine 414, serine 423, serine 442, and serine 461. Disordered stretches follow at residues 471 to 497 (AEDSSKVSGGTPIKIEDPNQFVPLNTN), 535 to 555 (PSTMQFEDDDHGPPAPPNPFS), 575 to 610 (GLEDAEQELLSDDASSVSQIQSQTQSPQNVPEKLEE), and 666 to 706 (EKIE…KVEA). Lysine 484 is covalently cross-linked (Glycyl lysine isopeptide (Lys-Gly) (interchain with G-Cter in SUMO2)). Serine 585, serine 590, serine 673, serine 677, serine 679, serine 681, and serine 683 each carry phosphoserine. Residues 589–602 (SSVSQIQSQTQSPQ) show a composition bias toward low complexity. A compositionally biased stretch (basic residues) spans 682–706 (PSKKKKKFRTPSFLKKNKKKEKVEA). Residues 684-701 (KKKKKFRTPSFLKKNKKK) form an interaction with calmodulin region.

It belongs to the aldolase class II family. Adducin subfamily. Heterodimer of an alpha and a gamma subunit. Sumoylated. Post-translationally, proteolytically cleaved by asparagine endopeptidase (AEP) into 2 fragments. Overexpression of the 1-357 fragment induces neuronal apoptosis, and overexpression of either 1-357 or 358-706 fragment increases the degeneration of dendritic spines. Overexpression of the 1-357 fragment impairs neurite outgrowth by downregulating the expression of Rac2, and induces synaptic dysfunction and cognitive impairments in tau P301S transgenic mice, a mouse model for Alzheimer disease (AD). As to expression, ubiquitously expressed. Cleavage fragment 1-357 is abundantly expressed in the brain of patients with Alzheimer disease (AD), but hardly detectable in age-matched control individuals (at protein level).

It localises to the cytoplasm. The protein resides in the cytoskeleton. Its subcellular location is the cell membrane. Membrane-cytoskeleton-associated protein that promotes the assembly of the spectrin-actin network. Plays a role in actin filament capping. Binds to calmodulin. Involved in myogenic reactivity of the renal afferent arteriole (Af-art), renal interlobular arteries and middle cerebral artery (MCA) to increased perfusion pressure. Involved in regulation of potassium channels in the vascular smooth muscle cells (VSMCs) of the Af-art and MCA ex vivo. Involved in regulation of glomerular capillary pressure, glomerular filtration rate (GFR) and glomerular nephrin expression in response to hypertension. Involved in renal blood flow (RBF) autoregulation. Plays a role in podocyte structure and function. Regulates globular monomer actin (G-actin) and filamentous polymer actin (F-actin) ratios in the primary podocytes affecting actin cytoskeleton organization. Regulates expression of synaptopodin, RhoA, Rac1 and CDC42 in the renal cortex and the primary podocytes. Regulates expression of nephrin in the glomeruli and in the primary podocytes, expression of nephrin and podocinin in the renal cortex, and expression of focal adhesion proteins integrin alpha-3 and integrin beta-1 in the glomeruli. Involved in cell migration and cell adhesion of podocytes, and in podocyte foot process effacement. Regulates expression of profibrotics markers MMP2, MMP9, TGF beta-1, tubular tight junction protein E-cadherin, and mesenchymal markers vimentin and alpha-SMA. Promotes the growth of neurites. The chain is Gamma-adducin (ADD3) from Homo sapiens (Human).